The following is a 501-amino-acid chain: Cytochrome P450 2J4 (501 aa).

The next 2 helical transmembrane spans lie at 12-32 (IWAA…LLLA) and 77-97 (NIFS…LPLI). Heme is bound at residue Cys447.

It belongs to the cytochrome P450 family. Requires heme as cofactor. Expressed in small intestinal enterocytes (at protein level). In the intestinal crypt, expressed at higher levels in the mature villous cells than in undifferentiated crypt cells (at protein level). Expressed in liver, kidney, lung, and olfactory mucosa (at protein level).

Its subcellular location is the endoplasmic reticulum membrane. It is found in the microsome membrane. The catalysed reaction is an organic molecule + reduced [NADPH--hemoprotein reductase] + O2 = an alcohol + oxidized [NADPH--hemoprotein reductase] + H2O + H(+). It catalyses the reaction (5Z,8Z,11Z,14Z)-eicosatetraenoate + reduced [NADPH--hemoprotein reductase] + O2 = 19-hydroxy-(5Z,8Z,11Z,14Z)-eicosatetraenoate + oxidized [NADPH--hemoprotein reductase] + H2O + H(+). It carries out the reaction all-trans-retinal + reduced [NADPH--hemoprotein reductase] + O2 = all-trans-retinoate + oxidized [NADPH--hemoprotein reductase] + H2O + 2 H(+). The enzyme catalyses 9-cis-retinal + reduced [NADPH--hemoprotein reductase] + O2 = 9-cis-retinoate + oxidized [NADPH--hemoprotein reductase] + H2O + 2 H(+). The protein operates within lipid metabolism; arachidonate metabolism. It functions in the pathway cofactor metabolism; retinol metabolism. Functionally, a cytochrome P450 monooxygenase that may play a major role in intestinal retinoid metabolism. Catalyzes the oxidative transformation of all-trans retinal and 9-cis-retinal to the corresponding active forms all-trans and 9-cis retinoic acids. Catalyzes the hydroxylation of carbon-hydrogen bonds. Hydroxylates arachidonic acid predominantly at the omega-1 position. Mechanistically, uses molecular oxygen inserting one oxygen atom into a substrate, and reducing the second into a water molecule, with two electrons provided by NADPH via cytochrome P450 reductase (CPR; NADPH--hemoprotein reductase). The sequence is that of Cytochrome P450 2J4 from Rattus norvegicus (Rat).